We begin with the raw amino-acid sequence, 619 residues long: Chaperone protein HscA homolog (619 aa).

It belongs to the heat shock protein 70 family.

Functionally, chaperone involved in the maturation of iron-sulfur cluster-containing proteins. Has a low intrinsic ATPase activity which is markedly stimulated by HscB. The polypeptide is Chaperone protein HscA homolog (Acinetobacter baumannii (strain AB0057)).